The primary structure comprises 408 residues: LL-diaminopimelate aminotransferase (408 aa).

Substrate is bound by residues Y15 and G42. Pyridoxal 5'-phosphate is bound by residues Y72, 108–109 (SK), Y132, N187, Y218, and 246–248 (SFS). K109, Y132, and N187 together coordinate substrate. K249 carries the N6-(pyridoxal phosphate)lysine modification. Pyridoxal 5'-phosphate is bound by residues R257 and N292. Positions 292 and 388 each coordinate substrate.

The protein belongs to the class-I pyridoxal-phosphate-dependent aminotransferase family. LL-diaminopimelate aminotransferase subfamily. As to quaternary structure, homodimer. It depends on pyridoxal 5'-phosphate as a cofactor.

It catalyses the reaction (2S,6S)-2,6-diaminopimelate + 2-oxoglutarate = (S)-2,3,4,5-tetrahydrodipicolinate + L-glutamate + H2O + H(+). Its pathway is amino-acid biosynthesis; L-lysine biosynthesis via DAP pathway; LL-2,6-diaminopimelate from (S)-tetrahydrodipicolinate (aminotransferase route): step 1/1. Functionally, involved in the synthesis of meso-diaminopimelate (m-DAP or DL-DAP), required for both lysine and peptidoglycan biosynthesis. Catalyzes the direct conversion of tetrahydrodipicolinate to LL-diaminopimelate. The chain is LL-diaminopimelate aminotransferase from Prochlorococcus marinus (strain MIT 9303).